The following is a 337-amino-acid chain: Phenylalanine--tRNA ligase alpha subunit (337 aa).

Glutamate 258 is a Mg(2+) binding site.

It belongs to the class-II aminoacyl-tRNA synthetase family. Phe-tRNA synthetase alpha subunit type 1 subfamily. In terms of assembly, tetramer of two alpha and two beta subunits. It depends on Mg(2+) as a cofactor.

The protein resides in the cytoplasm. It catalyses the reaction tRNA(Phe) + L-phenylalanine + ATP = L-phenylalanyl-tRNA(Phe) + AMP + diphosphate + H(+). In Burkholderia thailandensis (strain ATCC 700388 / DSM 13276 / CCUG 48851 / CIP 106301 / E264), this protein is Phenylalanine--tRNA ligase alpha subunit.